Reading from the N-terminus, the 796-residue chain is Protein translocase subunit SecA 2 (796 aa).

ATP contacts are provided by residues Q84, 102–106, and D496; that span reads GEGKT.

Belongs to the SecA family. As to quaternary structure, monomer and homodimer. Part of the essential Sec protein translocation apparatus which comprises SecA, SecYEG and auxiliary proteins SecDF. Other proteins may also be involved.

It is found in the cell membrane. The protein resides in the cytoplasm. It catalyses the reaction ATP + H2O + cellular proteinSide 1 = ADP + phosphate + cellular proteinSide 2.. Its function is as follows. Part of the Sec protein translocase complex. Interacts with the SecYEG preprotein conducting channel. Has a central role in coupling the hydrolysis of ATP to the transfer of proteins into and across the cell membrane, serving as an ATP-driven molecular motor driving the stepwise translocation of polypeptide chains across the membrane. This is Protein translocase subunit SecA 2 from Staphylococcus epidermidis (strain ATCC 35984 / DSM 28319 / BCRC 17069 / CCUG 31568 / BM 3577 / RP62A).